Reading from the N-terminus, the 359-residue chain is 3-dehydroquinate synthase (359 aa).

NAD(+)-binding positions include 69 to 74 (DAEDGK), 103 to 107 (GAVTD), 127 to 128 (TT), K140, and K149. E182, H244, and H260 together coordinate Zn(2+).

The protein belongs to the sugar phosphate cyclases superfamily. Dehydroquinate synthase family. Requires NAD(+) as cofactor. Co(2+) serves as cofactor. It depends on Zn(2+) as a cofactor.

The protein localises to the cytoplasm. The enzyme catalyses 7-phospho-2-dehydro-3-deoxy-D-arabino-heptonate = 3-dehydroquinate + phosphate. It functions in the pathway metabolic intermediate biosynthesis; chorismate biosynthesis; chorismate from D-erythrose 4-phosphate and phosphoenolpyruvate: step 2/7. In terms of biological role, catalyzes the conversion of 3-deoxy-D-arabino-heptulosonate 7-phosphate (DAHP) to dehydroquinate (DHQ). The protein is 3-dehydroquinate synthase of Corynebacterium pseudotuberculosis (strain C231).